The sequence spans 495 residues: Probable endopolygalacturonase D (495 aa).

The first 16 residues, 1–16, serve as a signal peptide directing secretion; that stretch reads MKRSALLASFLPLALG. Cys154 and Cys169 are oxidised to a cystine. PbH1 repeat units follow at residues 261–283, 284–322, and 323–344; these read MYNS…EIEN, TEYL…DIKQ, and SDFL…AVTS. Residue Asn295 is glycosylated (N-linked (GlcNAc...) asparagine). Asp337 functions as the Proton donor in the catalytic mechanism. Residues Cys339 and Cys355 are joined by a disulfide bond. His359 is an active-site residue. Residue Asn371 is glycosylated (N-linked (GlcNAc...) asparagine). PbH1 repeat units lie at residues 374–395 and 403–425; these read VDGV…RIKS and VYNV…DIQQ. N-linked (GlcNAc...) asparagine glycosylation is found at Asn410 and Asn444. Intrachain disulfides connect Cys464-Cys469 and Cys487-Cys494. The stretch at 469–492 is one PbH1 6 repeat; the sequence is CSNFVFTDVDITGGSDDSCNYPSS.

It belongs to the glycosyl hydrolase 28 family.

It is found in the secreted. It carries out the reaction (1,4-alpha-D-galacturonosyl)n+m + H2O = (1,4-alpha-D-galacturonosyl)n + (1,4-alpha-D-galacturonosyl)m.. Its function is as follows. Involved in maceration and soft-rotting of plant tissue. Hydrolyzes the 1,4-alpha glycosidic bonds of de-esterified pectate in the smooth region of the plant cell wall. In Aspergillus niger (strain ATCC MYA-4892 / CBS 513.88 / FGSC A1513), this protein is Probable endopolygalacturonase D (pgaD).